The following is a 440-amino-acid chain: tRNA-2-methylthio-N(6)-dimethylallyladenosine synthase (440 aa).

The MTTase N-terminal domain occupies 7–123 (NTFYIHTFGC…LPQLIEQARS (117 aa)). [4Fe-4S] cluster-binding residues include C16, C52, C86, C159, C163, and C166. The region spanning 145 to 375 (RQGSISAFVP…IDLQNTISGE (231 aa)) is the Radical SAM core domain. A TRAM domain is found at 378-440 (QQAIGSVVEV…TSATLTGRPV (63 aa)).

It belongs to the methylthiotransferase family. MiaB subfamily. In terms of assembly, monomer. [4Fe-4S] cluster is required as a cofactor.

The protein localises to the cytoplasm. It carries out the reaction N(6)-dimethylallyladenosine(37) in tRNA + (sulfur carrier)-SH + AH2 + 2 S-adenosyl-L-methionine = 2-methylsulfanyl-N(6)-dimethylallyladenosine(37) in tRNA + (sulfur carrier)-H + 5'-deoxyadenosine + L-methionine + A + S-adenosyl-L-homocysteine + 2 H(+). Functionally, catalyzes the methylthiolation of N6-(dimethylallyl)adenosine (i(6)A), leading to the formation of 2-methylthio-N6-(dimethylallyl)adenosine (ms(2)i(6)A) at position 37 in tRNAs that read codons beginning with uridine. The polypeptide is tRNA-2-methylthio-N(6)-dimethylallyladenosine synthase (Pelodictyon phaeoclathratiforme (strain DSM 5477 / BU-1)).